The primary structure comprises 65 residues: Bacteriocin amylovorin-L (65 aa).

A propeptide spanning residues 1 to 15 (MKQLNSEQLQNIIGG) is cleaved from the precursor. A helical membrane pass occupies residues 39–59 (LGGVWGAVIGGVGGAAVCGLA).

As to quaternary structure, active lactobin is composed of two different peptides, one which is lactobin A.

It is found in the secreted. The protein localises to the host cell membrane. In terms of biological role, this heat stable bacteriocin inhibits the growth of closely related Lactobacillus species. It may act as a pore-forming protein, creating a channel in the cell membrane. It kills Lactobacillus helveticus ATCC 15009, but displays no activity towards Listeria species. In Lactobacillus amylovorus, this protein is Bacteriocin amylovorin-L (amyL).